The primary structure comprises 135 residues: Histone H2A.4 (135 aa).

It belongs to the histone H2A family. In terms of assembly, the nucleosome is a histone octamer containing two molecules each of H2A, H2B, H3 and H4 assembled in one H3-H4 heterotetramer and two H2A-H2B heterodimers. The octamer wraps approximately 147 bp of DNA. In terms of tissue distribution, expressed preferentially in meristematic tissues of young seedlings, in stigma and ovary but not in pollen.

It localises to the nucleus. Its subcellular location is the chromosome. Its function is as follows. Core component of nucleosome. Nucleosomes wrap and compact DNA into chromatin, limiting DNA accessibility to the cellular machineries which require DNA as a template. Histones thereby play a central role in transcription regulation, DNA repair, DNA replication and chromosomal stability. DNA accessibility is regulated via a complex set of post-translational modifications of histones, also called histone code, and nucleosome remodeling. The protein is Histone H2A.4 (TH254) of Triticum aestivum (Wheat).